The chain runs to 487 residues: Argininosuccinate lyase (487 aa).

It belongs to the lyase 1 family. Argininosuccinate lyase subfamily.

The protein localises to the cytoplasm. The enzyme catalyses 2-(N(omega)-L-arginino)succinate = fumarate + L-arginine. The protein operates within amino-acid biosynthesis; L-arginine biosynthesis; L-arginine from L-ornithine and carbamoyl phosphate: step 3/3. The sequence is that of Argininosuccinate lyase from Methanothrix thermoacetophila (strain DSM 6194 / JCM 14653 / NBRC 101360 / PT) (Methanosaeta thermophila).